Here is a 147-residue protein sequence, read N- to C-terminus: Large ribosomal subunit protein uL13 (147 aa).

It belongs to the universal ribosomal protein uL13 family. Part of the 50S ribosomal subunit.

In terms of biological role, this protein is one of the early assembly proteins of the 50S ribosomal subunit, although it is not seen to bind rRNA by itself. It is important during the early stages of 50S assembly. The chain is Large ribosomal subunit protein uL13 from Mycolicibacterium paratuberculosis (strain ATCC BAA-968 / K-10) (Mycobacterium paratuberculosis).